A 428-amino-acid chain; its full sequence is Adenylosuccinate synthetase (428 aa).

Residues 12–18 and 40–42 contribute to the GTP site; these read GDEGKGK and GHT. The Proton acceptor role is filled by Asp13. Residues Asp13 and Gly40 each contribute to the Mg(2+) site. IMP-binding positions include 13–16, 38–41, Thr129, Arg143, Gln224, Thr239, and Arg303; these read DEGK and NAGH. The active-site Proton donor is the His41. 299–305 contributes to the substrate binding site; the sequence is VTTGRIR. GTP contacts are provided by residues Arg305, 331-333, and 410-412; these read KVD and AYG.

This sequence belongs to the adenylosuccinate synthetase family. Homodimer. Mg(2+) is required as a cofactor.

It is found in the cytoplasm. It carries out the reaction IMP + L-aspartate + GTP = N(6)-(1,2-dicarboxyethyl)-AMP + GDP + phosphate + 2 H(+). It participates in purine metabolism; AMP biosynthesis via de novo pathway; AMP from IMP: step 1/2. In terms of biological role, plays an important role in the de novo pathway of purine nucleotide biosynthesis. Catalyzes the first committed step in the biosynthesis of AMP from IMP. This Francisella tularensis subsp. mediasiatica (strain FSC147) protein is Adenylosuccinate synthetase.